A 512-amino-acid chain; its full sequence is Probable malate:quinone oxidoreductase (512 aa).

This sequence belongs to the MQO family. FAD serves as cofactor.

It carries out the reaction (S)-malate + a quinone = a quinol + oxaloacetate. It functions in the pathway carbohydrate metabolism; tricarboxylic acid cycle; oxaloacetate from (S)-malate (quinone route): step 1/1. This is Probable malate:quinone oxidoreductase from Rhodococcus erythropolis (strain PR4 / NBRC 100887).